We begin with the raw amino-acid sequence, 1240 residues long: DNA-directed RNA polymerase subunit beta (1240 aa).

It belongs to the RNA polymerase beta chain family. The RNAP catalytic core consists of 2 alpha, 1 beta, 1 beta' and 1 omega subunit. When a sigma factor is associated with the core the holoenzyme is formed, which can initiate transcription.

It catalyses the reaction RNA(n) + a ribonucleoside 5'-triphosphate = RNA(n+1) + diphosphate. In terms of biological role, DNA-dependent RNA polymerase catalyzes the transcription of DNA into RNA using the four ribonucleoside triphosphates as substrates. In Rhodopirellula baltica (strain DSM 10527 / NCIMB 13988 / SH1), this protein is DNA-directed RNA polymerase subunit beta.